Reading from the N-terminus, the 98-residue chain is Large ribosomal subunit protein uL23c (98 aa).

Belongs to the universal ribosomal protein uL23 family. As to quaternary structure, part of the 50S ribosomal subunit.

It is found in the plastid. The protein localises to the chloroplast. Binds to 23S rRNA. The polypeptide is Large ribosomal subunit protein uL23c (rpl23) (Thalassiosira pseudonana (Marine diatom)).